Here is a 314-residue protein sequence, read N- to C-terminus: Acetyl-coenzyme A carboxylase carboxyl transferase subunit alpha (314 aa).

Residues 32–289 (EIDMLEASLK…KKMFLKHLNE (258 aa)) form the CoA carboxyltransferase C-terminal domain.

This sequence belongs to the AccA family. In terms of assembly, acetyl-CoA carboxylase is a heterohexamer composed of biotin carboxyl carrier protein (AccB), biotin carboxylase (AccC) and two subunits each of ACCase subunit alpha (AccA) and ACCase subunit beta (AccD).

It is found in the cytoplasm. It carries out the reaction N(6)-carboxybiotinyl-L-lysyl-[protein] + acetyl-CoA = N(6)-biotinyl-L-lysyl-[protein] + malonyl-CoA. Its pathway is lipid metabolism; malonyl-CoA biosynthesis; malonyl-CoA from acetyl-CoA: step 1/1. Component of the acetyl coenzyme A carboxylase (ACC) complex. First, biotin carboxylase catalyzes the carboxylation of biotin on its carrier protein (BCCP) and then the CO(2) group is transferred by the carboxyltransferase to acetyl-CoA to form malonyl-CoA. The sequence is that of Acetyl-coenzyme A carboxylase carboxyl transferase subunit alpha from Staphylococcus epidermidis (strain ATCC 12228 / FDA PCI 1200).